The sequence spans 279 residues: RRP15-like protein (279 aa).

Disordered stretches follow at residues 1-40 (MALL…GANA), 56-120 (GPTV…TERR), and 200-279 (KSTA…DEED). A compositionally biased stretch (basic and acidic residues) spans 73 to 83 (KTSEAAKKPGF). Composition is skewed to acidic residues over residues 93–104 (KEEDDDDEEDGD) and 213–224 (QETDDDDEDDTA). Residues 232–245 (KKSEWNVLREDFMT) show a composition bias toward basic and acidic residues. Positions 267–279 (DEADDSDDDDEED) are enriched in acidic residues.

The protein belongs to the RRP15 family.

This is RRP15-like protein from Drosophila pseudoobscura pseudoobscura (Fruit fly).